The sequence spans 130 residues: Small ribosomal subunit protein uS9 (130 aa).

This sequence belongs to the universal ribosomal protein uS9 family.

The chain is Small ribosomal subunit protein uS9 from Leptothrix cholodnii (strain ATCC 51168 / LMG 8142 / SP-6) (Leptothrix discophora (strain SP-6)).